Consider the following 198-residue polypeptide: Carnitine operon protein CaiE (198 aa).

The interval 179–198 (VEENRPRLKGTTDVKPKSAQ) is disordered. Positions 180–198 (EENRPRLKGTTDVKPKSAQ) are enriched in basic and acidic residues.

This sequence belongs to the transferase hexapeptide repeat family.

It functions in the pathway amine and polyamine metabolism; carnitine metabolism. Its function is as follows. Overproduction of CaiE stimulates the activity of CaiB and CaiD. The protein is Carnitine operon protein CaiE of Salmonella choleraesuis (strain SC-B67).